Reading from the N-terminus, the 286-residue chain is Shikimate dehydrogenase (NADP(+)) (286 aa).

Shikimate-binding positions include 21–23 and Thr68; that span reads TLS. The active-site Proton acceptor is Lys72. Glu84 contributes to the NADP(+) binding site. The shikimate site is built by Asn93 and Asp108. NADP(+) is bound by residues 132-136 and Leu230; that span reads GNGGA. Tyr232 is a shikimate binding site. NADP(+) is bound at residue Gly253.

This sequence belongs to the shikimate dehydrogenase family. Homodimer.

It catalyses the reaction shikimate + NADP(+) = 3-dehydroshikimate + NADPH + H(+). Its pathway is metabolic intermediate biosynthesis; chorismate biosynthesis; chorismate from D-erythrose 4-phosphate and phosphoenolpyruvate: step 4/7. Involved in the biosynthesis of the chorismate, which leads to the biosynthesis of aromatic amino acids. Catalyzes the reversible NADPH linked reduction of 3-dehydroshikimate (DHSA) to yield shikimate (SA). The sequence is that of Shikimate dehydrogenase (NADP(+)) from Microcystis aeruginosa (strain NIES-843 / IAM M-2473).